The sequence spans 545 residues: Putative transcription factor ecdB (545 aa).

The zn(2)-C6 fungal-type DNA-binding region spans 12–39; that stretch reads CDACRSRRVKCDGQRPSCMGCLSRGLDC. The segment at 79-99 is disordered; it reads PPPVLLASARPSSNPLSSHED.

It localises to the nucleus. This chain is Putative transcription factor ecdB, found in Aspergillus rugulosus (Emericella rugulosa).